Consider the following 117-residue polypeptide: Large ribosomal subunit protein uL18 (117 aa).

The protein belongs to the universal ribosomal protein uL18 family. As to quaternary structure, part of the 50S ribosomal subunit; part of the 5S rRNA/L5/L18/L25 subcomplex. Contacts the 5S and 23S rRNAs.

This is one of the proteins that bind and probably mediate the attachment of the 5S RNA into the large ribosomal subunit, where it forms part of the central protuberance. The chain is Large ribosomal subunit protein uL18 from Nitrosococcus oceani (strain ATCC 19707 / BCRC 17464 / JCM 30415 / NCIMB 11848 / C-107).